A 178-amino-acid chain; its full sequence is Acireductone dioxygenase (178 aa).

Positions 1–22 (MKAYWYDNKPGDQREPHDSGRP) are disordered. Basic and acidic residues predominate over residues 9 to 22 (KPGDQREPHDSGRP). Fe(2+)-binding residues include His81, His83, Glu87, and His126. Ni(2+) is bound by residues His81, His83, Glu87, and His126.

Belongs to the acireductone dioxygenase (ARD) family. The cofactor is Fe(2+). Ni(2+) serves as cofactor.

It localises to the cytoplasm. Its subcellular location is the nucleus. It catalyses the reaction 1,2-dihydroxy-5-(methylsulfanyl)pent-1-en-3-one + O2 = 4-methylsulfanyl-2-oxobutanoate + formate + 2 H(+). It carries out the reaction 1,2-dihydroxy-5-(methylsulfanyl)pent-1-en-3-one + O2 = 3-(methylsulfanyl)propanoate + CO + formate + 2 H(+). The protein operates within amino-acid biosynthesis; L-methionine biosynthesis via salvage pathway; L-methionine from S-methyl-5-thio-alpha-D-ribose 1-phosphate: step 5/6. In terms of biological role, catalyzes 2 different reactions between oxygen and the acireductone 1,2-dihydroxy-3-keto-5-methylthiopentene (DHK-MTPene) depending upon the metal bound in the active site. Fe-containing acireductone dioxygenase (Fe-ARD) produces formate and 2-keto-4-methylthiobutyrate (KMTB), the alpha-ketoacid precursor of methionine in the methionine recycle pathway. Ni-containing acireductone dioxygenase (Ni-ARD) produces methylthiopropionate, carbon monoxide and formate, and does not lie on the methionine recycle pathway. This is Acireductone dioxygenase (adi1) from Emericella nidulans (strain FGSC A4 / ATCC 38163 / CBS 112.46 / NRRL 194 / M139) (Aspergillus nidulans).